The primary structure comprises 126 residues: MRWSCHPMSSVTSRLRSATADTFALVVYCFFTGMAIEILLSGMSLQQSLSSRVLAIPVNVIIAWPFGQYRDAVVSLASRHGPKQFWTRNLADLLAMSVFNHRSMRRFFLRWGWSGGSCSRRWSAMR.

The helical transmembrane segment at 23-43 threads the bilayer; it reads FALVVYCFFTGMAIEILLSGM.

Belongs to the AlaE exporter family.

The protein localises to the cell inner membrane. In terms of biological role, exports L-alanine. The polypeptide is L-alanine exporter AlaE (Sodalis glossinidius (strain morsitans)).